The sequence spans 118 residues: MICOS complex subunit MIC13 (118 aa).

The Mitochondrial matrix segment spans residues 1 to 7 (MVPRVWS). Residues 8–26 (LMRFLIKGSVAGGAIYLVY) form a helical membrane-spanning segment. Topologically, residues 27–118 (DQDPLGPSDK…GWEYLKERTK (92 aa)) are mitochondrial intermembrane.

The protein belongs to the MICOS complex subunit Mic13 family. As to quaternary structure, component of the mitochondrial contact site and cristae organizing system (MICOS) complex, composed of at least MICOS10/MIC10, CHCHD3/MIC19, CHCHD6/MIC25, APOO/MIC26, MICOS13/MIC13, APOOL/MIC27 and IMMT/MIC60. The MICOS complex associates with mitochondrial outer membrane proteins SAMM50, MTX1 and MTX2 (together described as components of the mitochondrial outer membrane sorting assembly machinery (SAM) complex) and DNAJC11, mitochondrial inner membrane protein TMEM11 and with HSPA9. The MICOS and SAM complexes together with DNAJC11 are part of a large protein complex spanning both membranes termed the mitochondrial intermembrane space bridging (MIB) complex.

It is found in the mitochondrion inner membrane. Functionally, component of the MICOS complex, a large protein complex of the mitochondrial inner membrane that plays crucial roles in the maintenance of crista junctions, inner membrane architecture, and formation of contact sites to the outer membrane. Constituent of mature MICOS complex, it is required for the formation of cristae junction (CJ) and maintenance of cristae morphology. Required for the incorporation of MICOS10/MIC10 into the MICOS complex. The polypeptide is MICOS complex subunit MIC13 (Sus scrofa (Pig)).